The primary structure comprises 186 residues: Auxin-responsive protein IAA4 (186 aa).

An EAR-like (transcriptional repression) motif is present at residues 18–22 (LRLGL). Positions 25–62 (TEETVSCGKSNKRVLPEATEKEIESTGKTETASPPKAQ) are disordered. Residues 38-51 (VLPEATEKEIESTG) are compositionally biased toward basic and acidic residues. One can recognise a PB1 domain in the interval 88-175 (GNYVKVSMDG…SCKRLRIMKG (88 aa)).

It belongs to the Aux/IAA family. Homodimers and heterodimers. Interacts with TPL. Preferentially expressed in stems, leaves and flowers.

It localises to the nucleus. In terms of biological role, aux/IAA proteins are short-lived transcriptional factors that function as repressors of early auxin response genes at low auxin concentrations. Repression is thought to result from the interaction with auxin response factors (ARFs), proteins that bind to the auxin-responsive promoter element (AuxRE). Formation of heterodimers with ARF proteins may alter their ability to modulate early auxin response genes expression. The chain is Auxin-responsive protein IAA4 (IAA4) from Arabidopsis thaliana (Mouse-ear cress).